The following is a 223-amino-acid chain: MTIAKMIDHTALKPDTTKEQILTLTKEAREYGFASVCVNPTWVKLSAEQLAGAESVVCTVIGFPLGANTPEVKAFEVKDAIQNGAKEVDMVINIGALKDKDDELVERDIRAVVDAAKGKALVKVIIETCLLTDEEKVRACEIAVKAGTDFVKTSTGFSTGGATAEDIALMRKTVGPNIGVKASGGVRTKEDVEKMIEAGATRIGASAGVAIVSGEKPAKPDNY.

The active-site Proton donor/acceptor is aspartate 89. Lysine 152 (schiff-base intermediate with acetaldehyde) is an active-site residue. Lysine 181 (proton donor/acceptor) is an active-site residue.

Belongs to the DeoC/FbaB aldolase family. DeoC type 1 subfamily.

The protein localises to the cytoplasm. It carries out the reaction 2-deoxy-D-ribose 5-phosphate = D-glyceraldehyde 3-phosphate + acetaldehyde. It participates in carbohydrate degradation; 2-deoxy-D-ribose 1-phosphate degradation; D-glyceraldehyde 3-phosphate and acetaldehyde from 2-deoxy-alpha-D-ribose 1-phosphate: step 2/2. Its function is as follows. Catalyzes a reversible aldol reaction between acetaldehyde and D-glyceraldehyde 3-phosphate to generate 2-deoxy-D-ribose 5-phosphate. The sequence is that of Deoxyribose-phosphate aldolase from Listeria monocytogenes serotype 4b (strain CLIP80459).